The primary structure comprises 252 residues: 5'-nucleotidase SurE (252 aa).

Asp8, Asp9, Ser40, and Asn92 together coordinate a divalent metal cation.

It belongs to the SurE nucleotidase family. The cofactor is a divalent metal cation.

The protein localises to the cytoplasm. It carries out the reaction a ribonucleoside 5'-phosphate + H2O = a ribonucleoside + phosphate. Functionally, nucleotidase that shows phosphatase activity on nucleoside 5'-monophosphates. The sequence is that of 5'-nucleotidase SurE from Chelativorans sp. (strain BNC1).